The primary structure comprises 394 residues: Elongation factor Tu (394 aa).

The tr-type G domain maps to 10–204 (KPHLNVGTIG…ALDTYIPLPE (195 aa)). The G1 stretch occupies residues 19-26 (GHVDHGKT). A GTP-binding site is contributed by 19-26 (GHVDHGKT). Position 26 (T26) interacts with Mg(2+). The tract at residues 60 to 64 (GITIN) is G2. Residues 81–84 (DCPG) form a G3 region. GTP-binding positions include 81–85 (DCPGH) and 136–139 (NKCD). The G4 stretch occupies residues 136 to 139 (NKCD). A G5 region spans residues 174 to 176 (SAL).

It belongs to the TRAFAC class translation factor GTPase superfamily. Classic translation factor GTPase family. EF-Tu/EF-1A subfamily. As to quaternary structure, monomer.

Its subcellular location is the cytoplasm. The enzyme catalyses GTP + H2O = GDP + phosphate + H(+). Its function is as follows. GTP hydrolase that promotes the GTP-dependent binding of aminoacyl-tRNA to the A-site of ribosomes during protein biosynthesis. The polypeptide is Elongation factor Tu (Psychromonas ingrahamii (strain DSM 17664 / CCUG 51855 / 37)).